The sequence spans 365 residues: Putative agmatine deiminase (365 aa).

Cys-356 (amidino-cysteine intermediate) is an active-site residue.

This sequence belongs to the agmatine deiminase family.

It carries out the reaction agmatine + H2O = N-carbamoylputrescine + NH4(+). This is Putative agmatine deiminase from Latilactobacillus sakei subsp. sakei (strain 23K) (Lactobacillus sakei subsp. sakei).